The primary structure comprises 281 residues: Streptomycin biosynthesis protein StrF (281 aa).

Its pathway is antibiotic biosynthesis; streptomycin biosynthesis. Functionally, may be involved in the formation of N-methyl-L-glucosamine. This Streptomyces griseus protein is Streptomycin biosynthesis protein StrF (strF).